Consider the following 96-residue polypeptide: Small ribosomal subunit protein bS6 (96 aa).

This sequence belongs to the bacterial ribosomal protein bS6 family.

Binds together with bS18 to 16S ribosomal RNA. In Streptococcus thermophilus (strain ATCC BAA-250 / LMG 18311), this protein is Small ribosomal subunit protein bS6.